The chain runs to 799 residues: Armadillo repeat-containing protein wrm-1 (799 aa).

A compositionally biased stretch (basic and acidic residues) spans methionine 1 to lysine 10. The tract at residues methionine 1–proline 60 is disordered. A compositionally biased stretch (polar residues) spans proline 26–alanine 43. An ARM repeat occupies glutamate 454–glycine 496.

In terms of assembly, interacts (independently of ARM repeat) with nhr-25. Component of the beta-catenin-lit-1 complex (also called the lit-1/wrm-1 complex or the wrm-1/lit-1 kinase complex) at least composed of lit-1 and wrm-1. Interacts (via N-terminus) with lit-1; the interaction is direct and activates lit-1 kinase activity which leads to the phosphorylation of pop-1. This promotes pop-1 interaction with par-5 and translocation of pop-1 from the nucleus to the cytoplasm.

It is found in the cytoplasm. It localises to the cell cortex. The protein localises to the nucleus. Antagonistic role in the Wnt signaling pathway that operates in embryogenesis. When located at the cortex it has been shown to inhibit Wnt signaling during asymmetric cell division but when relocated to the nucleus it shows positive regulation. Has a role in blastomere signaling during endoderm specification. Component of the beta-catenin-lit-1 complex which promotes phosphorylation, down-regulation and subcellular relocation of pop-1. Within the complex, activates lit-1-dependent kinase activity. Can substitute for bar-1 indicating functional redundancy. Appears to have a role in centrosome positioning. Involved in the development of distal tip cells (DTC) by regulating the asymmetric distribution of cye-1 and cki-1 between the daughters of Z1.a and Z4.p cells. This Caenorhabditis briggsae protein is Armadillo repeat-containing protein wrm-1.